The primary structure comprises 424 residues: Enolase (424 aa).

Gln163 is a binding site for (2R)-2-phosphoglycerate. Glu205 serves as the catalytic Proton donor. Mg(2+) is bound by residues Asp242, Glu285, and Asp312. (2R)-2-phosphoglycerate is bound by residues Lys337, Arg366, Ser367, and Lys388. The active-site Proton acceptor is the Lys337.

It belongs to the enolase family. It depends on Mg(2+) as a cofactor.

It is found in the cytoplasm. It localises to the secreted. Its subcellular location is the cell surface. It carries out the reaction (2R)-2-phosphoglycerate = phosphoenolpyruvate + H2O. The protein operates within carbohydrate degradation; glycolysis; pyruvate from D-glyceraldehyde 3-phosphate: step 4/5. Catalyzes the reversible conversion of 2-phosphoglycerate (2-PG) into phosphoenolpyruvate (PEP). It is essential for the degradation of carbohydrates via glycolysis. The chain is Enolase from Sphingopyxis alaskensis (strain DSM 13593 / LMG 18877 / RB2256) (Sphingomonas alaskensis).